Reading from the N-terminus, the 242-residue chain is MPGPWLLLALALTLNLTGVPGGRAQPEAAQQEAVTAAEHPGLDDFLRQVERLLFLRENIQRLQGDQGEHSASQIFQSDWLSKRQHPGKREEEEEEGVEEEEEEEGGAVGPHKRQHPGRREDEASWSVDVTQHKRQHPGRRSPWLAYAVPKRQHPGRRLADPKAQRSWEEEEEEEEREEDLMPEKRQHPGKRALGGPCGPQGAYGQAGLLLGLLDDLSRSQGAEEKRQHPGRRAAWVREPLEE.

The signal sequence occupies residues 1 to 24 (MPGPWLLLALALTLNLTGVPGGRA). Disordered stretches follow at residues 63–205 (QGDQ…AYGQ) and 220–242 (QGAE…PLEE). The segment covering 69–79 (HSASQIFQSDW) has biased composition (polar residues). P86 carries the post-translational modification Proline amide. The segment covering 91–105 (EEEEEGVEEEEEEEG) has biased composition (acidic residues). A proline amide mark is found at P116, P137, and P154. Basic and acidic residues predominate over residues 157–167 (RLADPKAQRSW). Residues 168-178 (EEEEEEEEREE) show a composition bias toward acidic residues. Proline amide is present on residues P188 and P229.

This sequence belongs to the TRH family. In terms of tissue distribution, hypothalamus. Expressed in the hair follicle epithelium (at protein level).

The protein resides in the secreted. Its function is as follows. As a component of the hypothalamic-pituitary-thyroid axis, it controls the secretion of thyroid-stimulating hormone (TSH) and is involved in thyroid hormone synthesis regulation. It also operates as modulator of hair growth. It promotes hair-shaft elongation, prolongs the hair cycle growth phase (anagen) and antagonizes its termination (catagen) by TGFB2. It stimulates proliferation and inhibits apoptosis of hair matrix keratinocytes. This is Pro-thyrotropin-releasing hormone (TRH) from Homo sapiens (Human).